The primary structure comprises 127 residues: Large-conductance mechanosensitive channel (127 aa).

3 consecutive transmembrane segments (helical) span residues 9-29 (EFAM…GVAF), 32-52 (IVTA…LGGI), and 75-95 (VIDF…INLL).

Belongs to the MscL family. Homopentamer.

It is found in the cell inner membrane. Functionally, channel that opens in response to stretch forces in the membrane lipid bilayer. May participate in the regulation of osmotic pressure changes within the cell. The polypeptide is Large-conductance mechanosensitive channel (Legionella pneumophila (strain Paris)).